A 201-amino-acid polypeptide reads, in one-letter code: Mediator of RNA polymerase II transcription subunit 19 (201 aa).

The tract at residues 166–201 (GTGKSNAKKRKNRSNGSSMATPNSEMQDDVKRRRLE) is disordered.

It belongs to the Mediator complex subunit 19 family. In terms of assembly, component of the Mediator complex.

Its subcellular location is the nucleus. Functionally, component of the Mediator complex, a coactivator involved in the regulated transcription of nearly all RNA polymerase II-dependent genes. Mediator functions as a bridge to convey information from gene-specific regulatory proteins to the basal RNA polymerase II transcription machinery. Mediator is recruited to promoters by direct interactions with regulatory proteins and serves as a scaffold for the assembly of a functional preinitiation complex with RNA polymerase II and the general transcription factors. This is Mediator of RNA polymerase II transcription subunit 19 (ROX3) from Candida glabrata (strain ATCC 2001 / BCRC 20586 / JCM 3761 / NBRC 0622 / NRRL Y-65 / CBS 138) (Yeast).